The following is a 446-amino-acid chain: Iron-sulfur cluster assembly SufBD family protein PH1385 (446 aa).

Belongs to the iron-sulfur cluster assembly SufBD family.

In Pyrococcus horikoshii (strain ATCC 700860 / DSM 12428 / JCM 9974 / NBRC 100139 / OT-3), this protein is Iron-sulfur cluster assembly SufBD family protein PH1385.